The primary structure comprises 92 residues: PqqA binding protein (92 aa).

The protein belongs to the PqqD family. In terms of assembly, monomer. Interacts with PqqE.

It functions in the pathway cofactor biosynthesis; pyrroloquinoline quinone biosynthesis. Functions as a PqqA binding protein and presents PqqA to PqqE, in the pyrroloquinoline quinone (PQQ) biosynthetic pathway. The protein is PqqA binding protein of Azotobacter vinelandii (strain DJ / ATCC BAA-1303).